A 197-amino-acid polypeptide reads, in one-letter code: Imidazoleglycerol-phosphate dehydratase (197 aa).

This sequence belongs to the imidazoleglycerol-phosphate dehydratase family.

The protein localises to the cytoplasm. The catalysed reaction is D-erythro-1-(imidazol-4-yl)glycerol 3-phosphate = 3-(imidazol-4-yl)-2-oxopropyl phosphate + H2O. It functions in the pathway amino-acid biosynthesis; L-histidine biosynthesis; L-histidine from 5-phospho-alpha-D-ribose 1-diphosphate: step 6/9. The chain is Imidazoleglycerol-phosphate dehydratase from Rhodopseudomonas palustris (strain BisA53).